Reading from the N-terminus, the 178-residue chain is Ribosome maturation factor RimM (178 aa).

The PRC barrel domain maps to 101-178 (DGEYYWYQLQ…EMQVDWDADF (78 aa)).

It belongs to the RimM family. Binds ribosomal protein uS19.

It localises to the cytoplasm. An accessory protein needed during the final step in the assembly of 30S ribosomal subunit, possibly for assembly of the head region. Essential for efficient processing of 16S rRNA. May be needed both before and after RbfA during the maturation of 16S rRNA. It has affinity for free ribosomal 30S subunits but not for 70S ribosomes. This chain is Ribosome maturation factor RimM, found in Stutzerimonas stutzeri (strain A1501) (Pseudomonas stutzeri).